A 340-amino-acid polypeptide reads, in one-letter code: Uroporphyrinogen decarboxylase (340 aa).

Substrate is bound by residues 23–27 (RQAGR), Asp-72, Tyr-147, Thr-202, and His-316.

It belongs to the uroporphyrinogen decarboxylase family. In terms of assembly, homodimer.

Its subcellular location is the cytoplasm. It carries out the reaction uroporphyrinogen III + 4 H(+) = coproporphyrinogen III + 4 CO2. It functions in the pathway porphyrin-containing compound metabolism; protoporphyrin-IX biosynthesis; coproporphyrinogen-III from 5-aminolevulinate: step 4/4. Functionally, catalyzes the decarboxylation of four acetate groups of uroporphyrinogen-III to yield coproporphyrinogen-III. This chain is Uroporphyrinogen decarboxylase, found in Pelobacter propionicus (strain DSM 2379 / NBRC 103807 / OttBd1).